The sequence spans 82 residues: Small ribosomal subunit protein bS16 (82 aa).

It belongs to the bacterial ribosomal protein bS16 family.

This Synechococcus elongatus (strain ATCC 33912 / PCC 7942 / FACHB-805) (Anacystis nidulans R2) protein is Small ribosomal subunit protein bS16.